A 223-amino-acid polypeptide reads, in one-letter code: Germin-like protein 1-3 (223 aa).

The N-terminal stretch at 1–22 is a signal peptide; it reads MAKLILATFAVVFMALAATSLA. Cysteines 32 and 50 form a disulfide. Asn55 carries N-linked (GlcNAc...) asparagine glycosylation. The Cupin type-1 domain maps to 64-212; the sequence is DGLMKAGNTG…AFQVDGGMVE (149 aa). His112, His114, Glu119, and His158 together coordinate Mn(2+).

Belongs to the germin family. In terms of assembly, oligomer (believed to be a pentamer but probably hexamer).

The protein localises to the secreted. The protein resides in the extracellular space. Its subcellular location is the apoplast. Functionally, may play a role in plant defense. Probably has no oxalate oxidase activity even if the active site is conserved. In Oryza sativa subsp. japonica (Rice), this protein is Germin-like protein 1-3 (GER8).